We begin with the raw amino-acid sequence, 118 residues long: Holo-[acyl-carrier-protein] synthase (118 aa).

Residues D8 and E58 each contribute to the Mg(2+) site.

The protein belongs to the P-Pant transferase superfamily. AcpS family. The cofactor is Mg(2+).

The protein resides in the cytoplasm. The catalysed reaction is apo-[ACP] + CoA = holo-[ACP] + adenosine 3',5'-bisphosphate + H(+). In terms of biological role, transfers the 4'-phosphopantetheine moiety from coenzyme A to a Ser of acyl-carrier-protein. In Streptococcus pyogenes serotype M5 (strain Manfredo), this protein is Holo-[acyl-carrier-protein] synthase.